Reading from the N-terminus, the 302-residue chain is L-threonate dehydrogenase (302 aa).

NAD(+) contacts are provided by residues 7-35 and Thr-102; that span reads FHVG…TWGA. Residue Lys-178 is part of the active site. NAD(+) is bound at residue Lys-246.

It belongs to the HIBADH-related family. L-threonate dehydrogenase subfamily.

The catalysed reaction is L-threonate + NAD(+) = 2-dehydro-L-erythronate + NADH + H(+). Functionally, catalyzes oxidation of L-threonate to 2-oxo-tetronate. Can use either NAD(+) or NADP(+) as cosubstrate, with a preference for NAD(+). This Escherichia coli O6:H1 (strain CFT073 / ATCC 700928 / UPEC) protein is L-threonate dehydrogenase.